The following is a 474-amino-acid chain: MTEVTIHQVPEMRRIRRIHFVGIGGAGMSGIAEVLLNQGYEISGSDLRESDVTRRLAGMGVHVFIGHHATNVDGASVVVNSSAVESGNPELMEAREKRIPIVRRAEMLGELMRYRHGIAVAGTHGKTTTTSLISSILAAGKKDPTFIIGGLLNSAGSNAGLGESRYLVAEADESDASFLHLQPMVSVVTNIDADHMDTYEGDFSKLKQTFIDFLHNLPFYGLAVVCGDDPIVTELIPAISRSVVTYGFNEDSDYRAFDVRQDGSKLRFKVARPEGLATLELFLNMPGKHNVLNATAAVAVASEEKVDDDAIQNGLANFMGVGRRFEIYGEFEVGAGPTAMLVDDYGHHPREVAATIAAVRDGWPDRRLVMVYQPHRYSRTRDLYEDFVEVLSTVDQLVLLEVYSAGEDPIPGADSRHLSRTIRTRGVVDPIFVEGVEGVPAVIKDIVQPGDIIITQGAGNVGTLAKELAKRNLG.

Glycine 122 to threonine 128 is a binding site for ATP.

This sequence belongs to the MurCDEF family.

The protein resides in the cytoplasm. The enzyme catalyses UDP-N-acetyl-alpha-D-muramate + L-alanine + ATP = UDP-N-acetyl-alpha-D-muramoyl-L-alanine + ADP + phosphate + H(+). It participates in cell wall biogenesis; peptidoglycan biosynthesis. Cell wall formation. The polypeptide is UDP-N-acetylmuramate--L-alanine ligase (Saccharophagus degradans (strain 2-40 / ATCC 43961 / DSM 17024)).